Here is a 141-residue protein sequence, read N- to C-terminus: Large ribosomal subunit protein uL16 (141 aa).

The segment at 1-23 (MLMPKRTKWRKQQKGRNRGKSFR) is disordered.

This sequence belongs to the universal ribosomal protein uL16 family. As to quaternary structure, part of the 50S ribosomal subunit.

Its function is as follows. Binds 23S rRNA and is also seen to make contacts with the A and possibly P site tRNAs. This chain is Large ribosomal subunit protein uL16, found in Sulfurovum sp. (strain NBC37-1).